The sequence spans 215 residues: Ribosomal RNA small subunit methyltransferase G (215 aa).

Residues Gly78, Leu83, 128-129 (AE), and Arg146 each bind S-adenosyl-L-methionine.

The protein belongs to the methyltransferase superfamily. RNA methyltransferase RsmG family.

Its subcellular location is the cytoplasm. It carries out the reaction guanosine(527) in 16S rRNA + S-adenosyl-L-methionine = N(7)-methylguanosine(527) in 16S rRNA + S-adenosyl-L-homocysteine. In terms of biological role, specifically methylates the N7 position of guanine in position 527 of 16S rRNA. The sequence is that of Ribosomal RNA small subunit methyltransferase G from Anaeromyxobacter sp. (strain Fw109-5).